The following is a 989-amino-acid chain: Phosphoenolpyruvate carboxylase (989 aa).

Catalysis depends on residues H175 and K630.

Belongs to the PEPCase type 1 family. Requires Mg(2+) as cofactor.

It carries out the reaction oxaloacetate + phosphate = phosphoenolpyruvate + hydrogencarbonate. In terms of biological role, forms oxaloacetate, a four-carbon dicarboxylic acid source for the tricarboxylic acid cycle. In Prochlorococcus marinus (strain AS9601), this protein is Phosphoenolpyruvate carboxylase.